Here is a 351-residue protein sequence, read N- to C-terminus: Protein disulfide isomerase CRELD2 (351 aa).

An N-terminal signal peptide occupies residues 1 to 21 (MRPPAPAVLGLLLLLLPTGEA). The CXXC signature appears at 28–31 (CKRC). 4 disulfide bridges follow: cysteine 28-cysteine 31, cysteine 137-cysteine 151, cysteine 145-cysteine 163, and cysteine 165-cysteine 174. In terms of domain architecture, EGF-like 1 spans 133–175 (DCLACQGGSERPCSGNGHCVGDGTREGDGSCQCHLGYQGPLCS). An FU 1 repeat occupies 190–237 (HSICSACDEACKTCVGPTNRDCGQCEVGWVRQDDACVDVDECAAEPPP). Asparagine 248 is a glycosylation site (N-linked (GlcNAc...) asparagine). One copy of the FU 2 repeat lies at 250–297 (SFVCEECDPTCMGCTGKGPTQCRECIAGYSKESGQCEDIDECSLAEKP). A CXXC motif is present at residues 260–263 (CMGC). Cystine bridges form between cysteine 260/cysteine 263, cysteine 291/cysteine 305, cysteine 298/cysteine 314, and cysteine 316/cysteine 327. Residues 287-328 (DIDECSLAEKPCLRDNENCYNTPGSFVCVCPDGFEEAEDTCV) form the EGF-like 2; calcium-binding domain. Positions 329–351 (QTRPAGAEATEASPTQPPSREDL) are disordered.

The protein belongs to the CRELD family. As to quaternary structure, interacts with CHRNA4. Component of a complex containing at least CRELD2, MANF, MATN3 and PDIA4.

It is found in the endoplasmic reticulum. The catalysed reaction is Catalyzes the rearrangement of -S-S- bonds in proteins.. In terms of biological role, protein disulfide isomerase. Might play a role in the unfolded protein response. May regulate transport of alpha4-beta2 neuronal acetylcholine receptor. In Bos taurus (Bovine), this protein is Protein disulfide isomerase CRELD2 (CRELD2).